Consider the following 396-residue polypeptide: Tryptophan synthase beta chain (396 aa).

An N6-(pyridoxal phosphate)lysine modification is found at K88.

Belongs to the TrpB family. Tetramer of two alpha and two beta chains. Pyridoxal 5'-phosphate is required as a cofactor.

It carries out the reaction (1S,2R)-1-C-(indol-3-yl)glycerol 3-phosphate + L-serine = D-glyceraldehyde 3-phosphate + L-tryptophan + H2O. The protein operates within amino-acid biosynthesis; L-tryptophan biosynthesis; L-tryptophan from chorismate: step 5/5. Its function is as follows. The beta subunit is responsible for the synthesis of L-tryptophan from indole and L-serine. This is Tryptophan synthase beta chain from Actinobacillus pleuropneumoniae serotype 3 (strain JL03).